The following is a 377-amino-acid chain: Ribosomal RNA large subunit methyltransferase G (377 aa).

Belongs to the methyltransferase superfamily. RlmG family.

It localises to the cytoplasm. It carries out the reaction guanosine(1835) in 23S rRNA + S-adenosyl-L-methionine = N(2)-methylguanosine(1835) in 23S rRNA + S-adenosyl-L-homocysteine + H(+). Its function is as follows. Specifically methylates the guanine in position 1835 (m2G1835) of 23S rRNA. This chain is Ribosomal RNA large subunit methyltransferase G, found in Shewanella oneidensis (strain ATCC 700550 / JCM 31522 / CIP 106686 / LMG 19005 / NCIMB 14063 / MR-1).